We begin with the raw amino-acid sequence, 541 residues long: MSKYSGEEFSNNGDFYDDFAHTGDPALDMEYERNYYASRMPENVKYFLMNFCQAVKEGNLYDIQNMYENTFPQISDHHFDKSSWPEETEVGALVENDKVFMILYKELYYRHIHARIPGGPKLDQRINSFFNYCDFFNLIISAPNPVMLELPDIWLWELVDEFVYQFQNFAQYRARLTDKSQEEIQQLCVNHSNVWSILCILNVLHSLVDISNIKKQLEAISGGIDPNTVSGDFGKLSFYKMLGYFSLVDLLRVHSLLGDYYQAIKVLEPIEIHKKSAYSHIPACQISTSYYVGFAYMMMRRYADAIRTFSDILLYIQRTKQLYSTRSYQNDQINKQAEQMYHLLAICLVLHPQCIDESIQQVLREKNYHDAMFKMQCGDLEVFKSFFVFACPRFVSPCPPAADAPMEDYVKDPMEHQLQVFMDEVRQQKDLPTTRSYLKLYTTLPLAKLASFIDPNANDDDVSKLLIRLLCFKHKMRNLVWSKGPSGLEGTFKSGSELDFYIDDDMIHIADTKVSHRYGDFFVRKILKFNDLNRKLKNINI.

Positions Thr308 to His516 constitute a PCI domain.

Belongs to the eIF-3 subunit L family. As to quaternary structure, component of the eukaryotic translation initiation factor 3 (eIF-3) complex. The eIF-3 complex interacts with pix.

Its subcellular location is the cytoplasm. Component of the eukaryotic translation initiation factor 3 (eIF-3) complex, which is involved in protein synthesis of a specialized repertoire of mRNAs and, together with other initiation factors, stimulates binding of mRNA and methionyl-tRNAi to the 40S ribosome. The eIF-3 complex specifically targets and initiates translation of a subset of mRNAs involved in cell proliferation. This chain is Eukaryotic translation initiation factor 3 subunit L, found in Drosophila persimilis (Fruit fly).